The chain runs to 214 residues: tRNA (guanine-N(7)-)-methyltransferase (214 aa).

S-adenosyl-L-methionine-binding residues include E44, E69, D96, and D118. D118 is a catalytic residue. Residue K122 participates in substrate binding. The interval 124–129 (RHEKRR) is interaction with RNA. Residues D154 and 192 to 195 (TEYE) contribute to the substrate site.

The protein belongs to the class I-like SAM-binding methyltransferase superfamily. TrmB family.

It carries out the reaction guanosine(46) in tRNA + S-adenosyl-L-methionine = N(7)-methylguanosine(46) in tRNA + S-adenosyl-L-homocysteine. It participates in tRNA modification; N(7)-methylguanine-tRNA biosynthesis. In terms of biological role, catalyzes the formation of N(7)-methylguanine at position 46 (m7G46) in tRNA. The chain is tRNA (guanine-N(7)-)-methyltransferase from Lacticaseibacillus casei (strain BL23) (Lactobacillus casei).